The following is a 250-amino-acid chain: 2,3-bisphosphoglycerate-dependent phosphoglycerate mutase (250 aa).

Substrate-binding positions include 8 to 15 (RHGESQWN), 21 to 22 (TG), R60, 87 to 90 (ERHY), K98, 114 to 115 (RR), and 183 to 184 (GN). Residue H9 is the Tele-phosphohistidine intermediate of the active site. Residue E87 is the Proton donor/acceptor of the active site.

This sequence belongs to the phosphoglycerate mutase family. BPG-dependent PGAM subfamily. In terms of assembly, homodimer.

It carries out the reaction (2R)-2-phosphoglycerate = (2R)-3-phosphoglycerate. The protein operates within carbohydrate degradation; glycolysis; pyruvate from D-glyceraldehyde 3-phosphate: step 3/5. Its function is as follows. Catalyzes the interconversion of 2-phosphoglycerate and 3-phosphoglycerate. This is 2,3-bisphosphoglycerate-dependent phosphoglycerate mutase from Bordetella avium (strain 197N).